We begin with the raw amino-acid sequence, 562 residues long: Bacillolysin (562 aa).

The signal sequence occupies residues 1 to 24; it reads MKKKKQALKVLLSVGILSSSFAFA. The propeptide at 25–245 is activation peptide; the sequence is HTSSAAPNNV…KQAAKPAAKP (221 aa). Ca(2+) contacts are provided by D303, D305, and D384. Residue H388 participates in Zn(2+) binding. The active site involves E389. H392 and E412 together coordinate Zn(2+). The Ca(2+) site is built by E423, N429, D431, E433, E436, Y439, T440, and D446. H477 (proton donor) is an active-site residue.

Belongs to the peptidase M4 family. It depends on Ca(2+) as a cofactor. Zn(2+) is required as a cofactor.

It is found in the secreted. The enzyme catalyses Similar, but not identical, to that of thermolysin.. In terms of biological role, extracellular zinc metalloprotease. This Priestia megaterium (strain ATCC 14581 / DSM 32 / CCUG 1817 / JCM 2506 / NBRC 15308 / NCIMB 9376 / NCTC 10342 / NRRL B-14308 / VKM B-512 / Ford 19) (Bacillus megaterium) protein is Bacillolysin.